The chain runs to 478 residues: Aspartyl/glutamyl-tRNA(Asn/Gln) amidotransferase subunit B (478 aa).

The protein belongs to the GatB/GatE family. GatB subfamily. Heterotrimer of A, B and C subunits.

It carries out the reaction L-glutamyl-tRNA(Gln) + L-glutamine + ATP + H2O = L-glutaminyl-tRNA(Gln) + L-glutamate + ADP + phosphate + H(+). The catalysed reaction is L-aspartyl-tRNA(Asn) + L-glutamine + ATP + H2O = L-asparaginyl-tRNA(Asn) + L-glutamate + ADP + phosphate + 2 H(+). In terms of biological role, allows the formation of correctly charged Asn-tRNA(Asn) or Gln-tRNA(Gln) through the transamidation of misacylated Asp-tRNA(Asn) or Glu-tRNA(Gln) in organisms which lack either or both of asparaginyl-tRNA or glutaminyl-tRNA synthetases. The reaction takes place in the presence of glutamine and ATP through an activated phospho-Asp-tRNA(Asn) or phospho-Glu-tRNA(Gln). This is Aspartyl/glutamyl-tRNA(Asn/Gln) amidotransferase subunit B from Dichelobacter nodosus (strain VCS1703A).